A 348-amino-acid chain; its full sequence is NADH-quinone oxidoreductase subunit H (348 aa).

The next 8 membrane-spanning stretches (helical) occupy residues 21–41 (IIGILVIALPLMLAVAMIIYA), 87–107 (GLFLLAPIITFTVALIVWAVI), 120–140 (IGLLYVLAASSIGVYGVIIAG), 166–186 (IGFVLISVVLWTGSFNMSAIV), 193–213 (IFGFINGYGFNPLLFPMAVVF), 258–278 (NVILMCGLNAILFWGGWLPPV), 283–303 (LYMVPGIIWFFAKLLFFFFVF), and 323–343 (WKVFLPLSLFWVFLVSGWLML).

This sequence belongs to the complex I subunit 1 family. NDH-1 is composed of 14 different subunits. Subunits NuoA, H, J, K, L, M, N constitute the membrane sector of the complex.

It is found in the cell inner membrane. It carries out the reaction a quinone + NADH + 5 H(+)(in) = a quinol + NAD(+) + 4 H(+)(out). Its function is as follows. NDH-1 shuttles electrons from NADH, via FMN and iron-sulfur (Fe-S) centers, to quinones in the respiratory chain. The immediate electron acceptor for the enzyme in this species is believed to be ubiquinone. Couples the redox reaction to proton translocation (for every two electrons transferred, four hydrogen ions are translocated across the cytoplasmic membrane), and thus conserves the redox energy in a proton gradient. This subunit may bind ubiquinone. This chain is NADH-quinone oxidoreductase subunit H, found in Rhizorhabdus wittichii (strain DSM 6014 / CCUG 31198 / JCM 15750 / NBRC 105917 / EY 4224 / RW1) (Sphingomonas wittichii).